The primary structure comprises 979 residues: Mast/stem cell growth factor receptor Kit (979 aa).

The signal sequence occupies residues 1–27 (MRGARGAWDFLCVLLLLLLLGVQTGSS). The Extracellular segment spans residues 28-527 (QPSVSPGEPS…QIHPHTLFTP (500 aa)). Ig-like C2-type domains are found at residues 29-114 (PSVS…VFVR), 123-207 (DLPL…LKVR), 214-311 (PVVS…LEVV), 320-413 (PMMS…VYVN), and 416-510 (PEIL…FNFA). A disulfide bridge links cysteine 60 with cysteine 99. N-linked (GlcNAc...) asparagine glycosylation is found at asparagine 96, asparagine 132, and asparagine 147. 3 cysteine pairs are disulfide-bonded: cysteine 138-cysteine 188, cysteine 153-cysteine 185, and cysteine 235-cysteine 293. Asparagine 286, asparagine 296, asparagine 303, asparagine 355, asparagine 370, asparagine 403, asparagine 466, and asparagine 489 each carry an N-linked (GlcNAc...) asparagine glycan. A disulfide bond links cysteine 431 and cysteine 494. A helical membrane pass occupies residues 528 to 548 (LLIGFVIAAGMMCIIVMILTY). The Cytoplasmic portion of the chain corresponds to 549–979 (KYLQKPMYEV…TQPLLVHEDV (431 aa)). Tyrosine 550, tyrosine 556, tyrosine 571, and tyrosine 573 each carry phosphotyrosine; by autocatalysis. Tyrosine 571 is a binding site for Mg(2+). An important for interaction with phosphotyrosine-binding proteins region spans residues 571-573 (YVY). The region spanning 592–940 (LSFGKTLGAG…ISDSTNHIYS (349 aa)) is the Protein kinase domain. Residues 599 to 606 (GAGAFGKV), lysine 626, and 674 to 680 (EYCCYGD) contribute to the ATP site. 3 positions are modified to phosphotyrosine; by autocatalysis: tyrosine 706, tyrosine 724, and tyrosine 733. Phosphoserine; by PKC/PRKCA occurs at positions 744 and 749. Aspartate 795 acts as the Proton acceptor in catalysis. Residue arginine 799 participates in ATP binding. The Mg(2+) site is built by asparagine 800 and aspartate 813. Position 824 is a phosphoserine (serine 824). The residue at position 826 (tyrosine 826) is a Phosphotyrosine; by autocatalysis. Serine 894 is modified (phosphoserine). Tyrosine 903 and tyrosine 939 each carry phosphotyrosine; by autocatalysis. Position 962 is a phosphoserine (serine 962).

It belongs to the protein kinase superfamily. Tyr protein kinase family. CSF-1/PDGF receptor subfamily. As to quaternary structure, monomer in the absence of bound KITLG/SCF. Homodimer in the presence of bound KITLG/SCF, forming a heterotetramer with two KITLG/SCF molecules. Interacts (via phosphorylated tyrosine residues) with the adapter proteins GRB2 and GRB7 (via SH2 domain), and SH2B2/APS. Interacts (via C-terminus) with MPDZ (via the tenth PDZ domain). Interacts (via phosphorylated tyrosine residues) with PIK3R1 and PIK3 catalytic subunit. Interacts (via phosphorylated tyrosine) with CRK (isoform Crk-II), FYN, SHC1 and MATK/CHK (via SH2 domain). Interacts with LYN and FES/FPS. Interacts (via phosphorylated tyrosine residues) with the protein phosphatases PTPN6/SHP-1 (via SH2 domain), PTPN11/SHP-2 (via SH2 domain) and PTPRU. Interacts with PLCG1. Interacts with DOK1 and TEC. Interacts with IL1RAP (independent of stimulation with KITLG/SCF). A mast cell-specific KITLG/SCF-induced interleukin-33 signaling complex contains IL1RL1, IL1RAP, KIT and MYD88. Ubiquitinated by SOCS6. KIT is rapidly ubiquitinated after autophosphorylation induced by KITLG/SCF binding, leading to internalization and degradation. Post-translationally, autophosphorylated on tyrosine residues. KITLG/SCF binding promotes autophosphorylation. Phosphorylated tyrosine residues are important for interaction with specific binding partners.

It is found in the cell membrane. The catalysed reaction is L-tyrosyl-[protein] + ATP = O-phospho-L-tyrosyl-[protein] + ADP + H(+). Present in an inactive conformation in the absence of bound ligand. KITLG/SCF binding leads to dimerization and activation by autophosphorylation on tyrosine residues. Activity is down-regulated by PRKCA-mediated phosphorylation on serine residues. Its function is as follows. Tyrosine-protein kinase that acts as a cell-surface receptor for the cytokine KITLG/SCF and plays an essential role in the regulation of cell survival and proliferation, hematopoiesis, stem cell maintenance, gametogenesis, mast cell development, migration and function, and in melanogenesis. In response to KITLG/SCF binding, KIT can activate several signaling pathways. Phosphorylates PIK3R1, PLCG1, SH2B2/APS and CBL. Activates the AKT1 signaling pathway by phosphorylation of PIK3R1, the regulatory subunit of phosphatidylinositol 3-kinase. Activated KIT also transmits signals via GRB2 and activation of RAS, RAF1 and the MAP kinases MAPK1/ERK2 and/or MAPK3/ERK1. Promotes activation of STAT family members STAT1, STAT3, STAT5A and STAT5B. Activation of PLCG1 leads to the production of the cellular signaling molecules diacylglycerol and inositol 1,4,5-trisphosphate. KIT signaling is modulated by protein phosphatases, and by rapid internalization and degradation of the receptor. Activated KIT promotes phosphorylation of the protein phosphatases PTPN6/SHP-1 and PTPRU, and of the transcription factors STAT1, STAT3, STAT5A and STAT5B. Promotes phosphorylation of PIK3R1, CBL, CRK (isoform Crk-II), LYN, MAPK1/ERK2 and/or MAPK3/ERK1, PLCG1, SRC and SHC1. The polypeptide is Mast/stem cell growth factor receptor Kit (KIT) (Canis lupus familiaris (Dog)).